Here is a 770-residue protein sequence, read N- to C-terminus: Probable zinc transporter protein DDB_G0291141 (770 aa).

The Cytoplasmic portion of the chain corresponds to 1 to 36 (MAGSLDDSIYNNGRSGGGGGGFKFSKGFNKDSISKR). A helical membrane pass occupies residues 37–57 (IIMMLFFSKGIRAWSCIILLY). Topologically, residues 58–62 (FLQSS) are extracellular. A helical transmembrane segment spans residues 63–83 (ISIISASFYMCLFSAIFSVVV). Over 84 to 100 (EKPWNLLSSLRPSQIKK) the chain is Cytoplasmic. The helical transmembrane segment at 101–117 (IIYHSIFNLLIIITWNS) threads the bilayer. At 118–123 (SIKFIG) the chain is on the extracellular side. Residues 124 to 146 (PIGSILASDYTFSTYPLIFNSLL) traverse the membrane as a helical segment. Over 147-154 (QGNFLATD) the chain is Cytoplasmic. A helical transmembrane segment spans residues 155-175 (MSRGSIMLMIGYFLIPLFGIS). Residues 176-184 (NRLDILGYT) are Extracellular-facing. The chain crosses the membrane as a helical span at residues 185–205 (SSQVFMIGLFSLIVHNVLVLW). Over 206 to 224 (KKTIVRSWNSGSSGGKNKL) the chain is Cytoplasmic. A helical transmembrane segment spans residues 225–245 (SSLGSCVSTIILFVFKLFEGF). Residues 246–262 (SSGSSGSDSINQVSYSQ) are Extracellular-facing. A helical membrane pass occupies residues 263 to 283 (LFVIAIITFILYSLNQFIDDV). Residues 284–291 (SEKELTFN) are Cytoplasmic-facing. The chain crosses the membrane as a helical span at residues 292–312 (VLSKVSLTSSVIFGLLAALFI). Residues 313–316 (GFKD) lie on the Extracellular side of the membrane. A helical membrane pass occupies residues 317–337 (FFHPILILSFIFIINAIHILY). Topologically, residues 338–404 (SKSNDIQPMT…QIVDKPTSRR (67 aa)) are cytoplasmic. Residues 405–425 (IFTFLVINLMFMFVEMAYGIW) traverse the membrane as a helical segment. The Extracellular portion of the chain corresponds to 426-434 (TNSLGLITD). A helical transmembrane segment spans residues 435–455 (ACHMFFDATALFIALVAEVIS). The Cytoplasmic segment spans residues 456–469 (QWKQNDKYSYGYGR). A helical membrane pass occupies residues 470–490 (FQVLSGFVNGIFLIFIAVTIL). Residues 491–507 (MESVERLLEPPEINTDK) lie on the Extracellular side of the membrane. The chain crosses the membrane as a helical span at residues 508–528 (LLLVSVLGFIINLIGIFSFHG). The Cytoplasmic portion of the chain corresponds to 529–592 (DHGHSHGGGG…GVFLHLLADT (64 aa)). The segment at 532-566 (HSHGGGGGHSHGGGEKKEKHHGHSHGGHGDHQQVT) is disordered. Residues 593–613 (LGSVGVIVSSLIIQIWGYTLA) form a helical membrane-spanning segment. A topological domain (extracellular) is located at residue Asp-614. A helical membrane pass occupies residues 615–635 (PICSLLISILIFLSVLPLIAN). The Cytoplasmic portion of the chain corresponds to 636-770 (TAKTLLQCTP…SSSSHHHRHN (135 aa)). A disordered region spans residues 751–770 (DIHHNHSSSSSSSSHHHRHN).

The protein belongs to the cation diffusion facilitator (CDF) transporter (TC 2.A.4) family. SLC30A subfamily.

It is found in the membrane. May be involved in zinc transport from the cytoplasm to either intracellular organelles or extracellular spaces. This chain is Probable zinc transporter protein DDB_G0291141, found in Dictyostelium discoideum (Social amoeba).